A 196-amino-acid polypeptide reads, in one-letter code: Ribonuclease HII (196 aa).

The RNase H type-2 domain maps to 4–196 (IWVCGVDEAG…PVRRVLEGSF (193 aa)). A divalent metal cation-binding residues include aspartate 10, glutamate 11, and aspartate 106.

This sequence belongs to the RNase HII family. It depends on Mn(2+) as a cofactor. The cofactor is Mg(2+).

It is found in the cytoplasm. The catalysed reaction is Endonucleolytic cleavage to 5'-phosphomonoester.. Its function is as follows. Endonuclease that specifically degrades the RNA of RNA-DNA hybrids. This is Ribonuclease HII from Polynucleobacter asymbioticus (strain DSM 18221 / CIP 109841 / QLW-P1DMWA-1) (Polynucleobacter necessarius subsp. asymbioticus).